A 414-amino-acid polypeptide reads, in one-letter code: Putative competence-damage inducible protein (414 aa).

It belongs to the CinA family.

The polypeptide is Putative competence-damage inducible protein (Limosilactobacillus fermentum (strain NBRC 3956 / LMG 18251) (Lactobacillus fermentum)).